Reading from the N-terminus, the 311-residue chain is Protoheme IX farnesyltransferase (311 aa).

Helical transmembrane passes span 30-50 (VVQL…PGWP), 55-75 (WGVA…AAAF), 108-128 (FAVL…NALT), 129-149 (MWLT…LLKP), 153-173 (QNIV…WAAM), 182-202 (WILC…LALY), 233-253 (FVLF…WFYL), and 287-307 (IWHL…GPLL).

This sequence belongs to the UbiA prenyltransferase family. Protoheme IX farnesyltransferase subfamily.

It localises to the cell inner membrane. The enzyme catalyses heme b + (2E,6E)-farnesyl diphosphate + H2O = Fe(II)-heme o + diphosphate. Its pathway is porphyrin-containing compound metabolism; heme O biosynthesis; heme O from protoheme: step 1/1. In terms of biological role, converts heme B (protoheme IX) to heme O by substitution of the vinyl group on carbon 2 of heme B porphyrin ring with a hydroxyethyl farnesyl side group. This is Protoheme IX farnesyltransferase from Methylibium petroleiphilum (strain ATCC BAA-1232 / LMG 22953 / PM1).